We begin with the raw amino-acid sequence, 337 residues long: Hsp90 co-chaperone Cdc37-like 1 (337 aa).

Over residues 1 to 11 (MEQPWPPPGPW) the composition is skewed to pro residues. The tract at residues 1-42 (MEQPWPPPGPWSLPRAEGEAEEENDLDVFPSSPRCPQLPGGS) is disordered. The self-association stretch occupies residues 2 to 171 (EQPWPPPGPW…YEQKIRHFGM (170 aa)). Phosphoserine occurs at positions 32 and 88. Residues 85–122 (NSESLDQEHAKAQIAVSELRQREEEWRQKEEALVQREK) adopt a coiled-coil conformation. Residues 147–277 (KDTEDEDKSE…SRVRLYSQSQ (131 aa)) are self-association and interaction with Hsp90. The interaction with Hsp70 stretch occupies residues 267-337 (KSRVRLYSQS…DDEPKMMDTV (71 aa)). The interval 278–337 (SFQPMTVQNHVPHSGVGSIGLLESLPQNPDYLQYSINTALCSLNSVVHKEDDEPKMMDTV) is required for interaction with STIP1.

The protein belongs to the CDC37 family. Self-associates. Forms complexes with Hsp70 and Hsp90. Interacts with CDC37, FKBP4, PPID and STIP1.

It localises to the cytoplasm. Functionally, co-chaperone that binds to numerous proteins and promotes their interaction with Hsp70 and Hsp90. The chain is Hsp90 co-chaperone Cdc37-like 1 (CDC37L1) from Pongo abelii (Sumatran orangutan).